A 529-amino-acid chain; its full sequence is DNA-binding protein (529 aa).

Residues 1-17 (MASREEEQRETTPERGR) show a composition bias toward basic and acidic residues. Disordered regions lie at residues 1–107 (MASR…IVDS) and 125–166 (PVLI…AESE). Positions 129 to 139 (KHGKGGKRTVR) are enriched in basic residues. Residues 155 to 165 (EEEEEPSEAES) are compositionally biased toward acidic residues. Tyr-195 carries the phosphotyrosine; by host modification. The Zn(2+) site is built by Cys-284 and His-286. A flexible loop region spans residues 297-331 (IEMDVTSENGQRALKEQSSKAKIVKNRWGRNVVQI). Residues Cys-339, Cys-355, Cys-396, Cys-398, Cys-450, and Cys-467 each contribute to the Zn(2+) site. Residues 513-529 (VSLPVAHSDARQNPFDF) form a C-terminal arm, DBP binding region.

This sequence belongs to the adenoviridae E2A DNA-binding protein family. In terms of assembly, homomultimerizes on viral ssDNA bound to pTP. Forms a initiation complex with viral polymerase, pTP and hosts NFIA and POU2F1/OCT1. Interacts with host SRCAP.

Its subcellular location is the host nucleus. In terms of biological role, plays a role in the elongation phase of viral strand displacement replication by unwinding the template in an ATP-independent fashion, employing its capacity to form multimers. Also enhances the rate of initiation. Released from template upon second strand synthesis. Assembles in complex with viral pTP, viral pol, host NFIA and host POU2F1/OCT1 on viral origin of replication. Covers the whole ssDNA genome during synthesis. The complementary strand synthesis induces its relese from DNA template. May inhibit cellular transcription mediated by the interaction between host SRCAP and CBP. The protein is DNA-binding protein of Human adenovirus C serotype 5 (HAdV-5).